Consider the following 203-residue polypeptide: Selenocysteine-containing peroxiredoxin PrxU (203 aa).

One can recognise a Thioredoxin domain in the interval 2 to 160 (VSVGKKAPDF…TLRQIQAFQL (159 aa)). The active site involves selenocysteine 47. Selenocysteine 47 is a non-standard amino acid (selenocysteine).

The protein belongs to the peroxiredoxin family. AhpC/Prx1 subfamily.

It catalyses the reaction a hydroperoxide + [thioredoxin]-dithiol = an alcohol + [thioredoxin]-disulfide + H2O. In terms of biological role, thiol-specific peroxidase that catalyzes the reduction of hydrogen peroxide and organic hydroperoxides to water and alcohols, respectively. Plays a role in cell protection against oxidative stress by detoxifying peroxides. This is Selenocysteine-containing peroxiredoxin PrxU from Peptoclostridium acidaminophilum (Eubacterium acidaminophilum).